The sequence spans 230 residues: Large ribosomal subunit protein uL1 (230 aa).

Belongs to the universal ribosomal protein uL1 family. In terms of assembly, part of the 50S ribosomal subunit.

Its function is as follows. Binds directly to 23S rRNA. The L1 stalk is quite mobile in the ribosome, and is involved in E site tRNA release. In terms of biological role, protein L1 is also a translational repressor protein, it controls the translation of the L11 operon by binding to its mRNA. In Acidiphilium cryptum (strain JF-5), this protein is Large ribosomal subunit protein uL1.